A 182-amino-acid chain; its full sequence is Inosine/xanthosine triphosphatase (182 aa).

Residues D38 and E68 each coordinate Mg(2+). 68-69 (EA) contacts substrate.

It belongs to the YjjX NTPase family. As to quaternary structure, homodimer. Mg(2+) serves as cofactor. Requires Mn(2+) as cofactor.

It catalyses the reaction XTP + H2O = XDP + phosphate + H(+). The catalysed reaction is ITP + H2O = IDP + phosphate + H(+). Its function is as follows. Phosphatase that hydrolyzes non-canonical purine nucleotides such as XTP and ITP to their respective diphosphate derivatives. Probably excludes non-canonical purines from DNA/RNA precursor pool, thus preventing their incorporation into DNA/RNA and avoiding chromosomal lesions. The protein is Inosine/xanthosine triphosphatase of Erwinia tasmaniensis (strain DSM 17950 / CFBP 7177 / CIP 109463 / NCPPB 4357 / Et1/99).